Consider the following 466-residue polypeptide: MSITSVASVFKGDFAIGSQITVRGWVRSRRDSKAGISFLAVYDGSCFDPIQGVVPNNLENYTNEVLKLTAGCSVVMTGEVVESPGKGQAFEMQVTKLEVVGFVEDPDTYPMAAKRHSIEYLRELAHLRPRTNIIGAVARVRNCLSQAIHRFYNEQGYIWVSTPLITASDTEGAGEMFRVSTLDLENLPRTDKGTVDYSEDFFGKESFLTVSGQLNAETYACALSKVYTFGPTFRAENSNTSRHLAEFWMVEPEVAFANLDDAAKLAEDMLKYCFKAVLEERRDDLEFFAQRVEKTAIERLEAFVSSDFAQIDYTDAIEILKACDKDFEYDVEWGIDLHSEHERYLAEEHFKAPVVVKNYPKDIKAFYMRLNDDGKTVAAMDVLAPGIGEIIGGAQREERLDVLDARLAEMELSQEDYWWYRDLRRYGTVPHAGFGLGFERLVSYVTGVSNIRDVIPFPRSPKSANF.

Belongs to the class-II aminoacyl-tRNA synthetase family. As to quaternary structure, homodimer.

Its subcellular location is the cytoplasm. The catalysed reaction is tRNA(Asn) + L-asparagine + ATP = L-asparaginyl-tRNA(Asn) + AMP + diphosphate + H(+). This is Asparagine--tRNA ligase from Shewanella halifaxensis (strain HAW-EB4).